Here is a 325-residue protein sequence, read N- to C-terminus: UPF0285 protein MmarC7_1666 (325 aa).

This sequence belongs to the UPF0285 family.

The chain is UPF0285 protein MmarC7_1666 from Methanococcus maripaludis (strain C7 / ATCC BAA-1331).